We begin with the raw amino-acid sequence, 78 residues long: Mambalgin-1 (78 aa).

Positions 1–21 (MKTLLLTLLVVTIVCLDLGYS) are cleaved as a signal peptide. Cystine bridges form between cysteine 24–cysteine 40, cysteine 33–cysteine 58, cysteine 62–cysteine 70, and cysteine 71–cysteine 76.

Belongs to the three-finger toxin family. Short-chain subfamily. Mambalgin sub-subfamily. As to expression, expressed by the venom gland.

It localises to the secreted. Functionally, this three-finger toxin inhibits ASIC channels. It acts as a gating modifier toxin by decreasing the apparent proton sensitivity of activation and by slightly increasing the apparent proton sensitivity for inactivation. It binds more tightly to the closed state and to a much lesser extent the inactivated/desensitized state of ASIC1a isoform of ASIC1. It interacts directly with the outside surface of the thumb domain of chicken ASIC1a (ASIC1a), but does not insert into the acidic pocket as suggested for mambalgin-2. This binding leads to relocation of the thumb domain that could disrupt the acidic pocket of cASIC1a. It reversibly inhibits rat ASIC1a (IC(50)=3.4-55 nM), rat ASIC1a-ASIC2b (IC(50)=61 nM), rat ASIC1a-ASIC1b (IC(50)=72 nM), human ASIC1a (IC(50)=127-580 nM), chicken ASIC1a (IC(50)=123.6 nM), rat ASIC1b (IC(50)=22.2-203 nM), rat ASIC1a-ASIC2a (IC(50)=152-252 nM). In vivo, it shows a potent naloxone-resistant analgesic effect against acute and inflammatory pain upon central and peripheral injection. In addition, it also has an opioid-independent effect on both thermal and mechanical inflammatory pain after systemic administration and is effective against neuropathic pain. The polypeptide is Mambalgin-1 (Dendroaspis polylepis polylepis (Black mamba)).